The primary structure comprises 429 residues: Histidine--tRNA ligase (429 aa).

It belongs to the class-II aminoacyl-tRNA synthetase family. In terms of assembly, homodimer.

The protein resides in the cytoplasm. It carries out the reaction tRNA(His) + L-histidine + ATP = L-histidyl-tRNA(His) + AMP + diphosphate + H(+). This Prochlorococcus marinus subsp. pastoris (strain CCMP1986 / NIES-2087 / MED4) protein is Histidine--tRNA ligase.